Reading from the N-terminus, the 163-residue chain is Putative phosphinothricin acetyltransferase YwnH (163 aa).

In terms of domain architecture, N-acetyltransferase spans M1–L158. Acetyl-CoA contacts are provided by residues I85–I87, K94–S98, and N124–P126.

It belongs to the acetyltransferase family. PAT/BAR subfamily.

The catalysed reaction is phosphinothricin + acetyl-CoA = N-acetylphosphinothricin + CoA + H(+). This enzyme is an effector of phosphinothricin tripeptide (PTT or bialaphos) resistance. Inactivates PTT by transfer of an acetyl group. This is Putative phosphinothricin acetyltransferase YwnH (ywnH) from Bacillus subtilis (strain 168).